Consider the following 131-residue polypeptide: Squamosa promoter-binding protein 1 (131 aa).

The span at 1-10 (MDTSKGEGKR) shows a compositional bias: basic and acidic residues. The disordered stretch occupies residues 1–52 (MDTSKGEGKRVIKLPGSQEQGEEEDDIGEDSKKTRALTPSGKRASGSTQRSC). The SBP-type zinc-finger motif lies at 49-126 (QRSCQVENCA…AGHNERRRKS (78 aa)). Zn(2+) is bound by residues C52, C57, C74, H77, C93, C96, H100, and C112. Positions 109–125 (KRSCRRRLAGHNERRRK) match the Bipartite nuclear localization signal motif.

It is found in the nucleus. Functionally, probable transcriptional factor. Binds to the promoter of the SQUAMOSA gene. In Antirrhinum majus (Garden snapdragon), this protein is Squamosa promoter-binding protein 1 (SBP1).